Reading from the N-terminus, the 453-residue chain is MEIIEHKVEFKYKSIDEYQWTDNFKLDKQWEILRFKKNKIVQKSYMNRFPYSEPKKDYSIALYSKNKWYCLKDGVGSYISIQKEKPQIKDLTITEIKYEPYLVIYKLDFEYHIMMTILHCDERVKLLEYKRPFLKEGIILFNEMKIYVYNGLFSYKGNKIEDFELFVNEFNSQYKENYDRLFKIFGKSNHTHKSIDYKTWCKAKRENQQEWPLFTNIKIKDSIEFPNNSGIYYYYPDKYVGLARRNDDNLIPLIPKIYRKNHYENKNSLLYKYVNGLPIDEEENIPYSFIKEKYKNIKYHEDEKIIEVDYNNNVVKQKDMAEYYCYNNKLIQKIEEPVKLPKIEAQILNKRNERVEVLIDNEWKNLAGNRIDGIPTLPWNYKHIIHDYNKLGRLKKGKIMDLTHIGIVNENGTDIITWPYTDDLYIGRSIETKRLITFKYQKNVEIYDKLIDM.

The presence of the two linear plasmids, termed pGKL1 and pGKL2, in strains of Kluyveromyces lactis confers the killer phenotype to the host cell, by promoting the secretion of a toxin able to inhibit the growth of sensitive strains. This is an uncharacterized protein from Kluyveromyces lactis (strain ATCC 8585 / CBS 2359 / DSM 70799 / NBRC 1267 / NRRL Y-1140 / WM37) (Yeast).